We begin with the raw amino-acid sequence, 478 residues long: FERM domain-containing protein B (478 aa).

Disordered regions lie at residues 19-39 (ELIP…TITS), 129-196 (EENS…GFLT), and 202-221 (KAQS…TIAS). 2 stretches are compositionally biased toward low complexity: residues 22–39 (PTQS…TITS) and 129–164 (EENS…ANDG). The FERM domain occupies 48–468 (VLIRIYFIDD…DWSEEWESKE (421 aa)). A compositionally biased stretch (gly residues) spans 165-179 (SGSGSGSGSGSGSGS). Low complexity-rich tracts occupy residues 180 to 189 (GTSTPNSPKG) and 204 to 216 (QSPQ…SSLS).

This is FERM domain-containing protein B (frmB) from Dictyostelium discoideum (Social amoeba).